Reading from the N-terminus, the 114-residue chain is Aspartate 1-decarboxylase (114 aa).

The active-site Schiff-base intermediate with substrate; via pyruvic acid is Ser25. Ser25 is subject to Pyruvic acid (Ser). Thr57 lines the substrate pocket. Catalysis depends on Tyr58, which acts as the Proton donor. 71-73 (GAA) serves as a coordination point for substrate.

Belongs to the PanD family. In terms of assembly, heterooctamer of four alpha and four beta subunits. The cofactor is pyruvate. Post-translationally, is synthesized initially as an inactive proenzyme, which is activated by self-cleavage at a specific serine bond to produce a beta-subunit with a hydroxyl group at its C-terminus and an alpha-subunit with a pyruvoyl group at its N-terminus.

It is found in the cytoplasm. It carries out the reaction L-aspartate + H(+) = beta-alanine + CO2. Its pathway is cofactor biosynthesis; (R)-pantothenate biosynthesis; beta-alanine from L-aspartate: step 1/1. Functionally, catalyzes the pyruvoyl-dependent decarboxylation of aspartate to produce beta-alanine. This is Aspartate 1-decarboxylase from Campylobacter hominis (strain ATCC BAA-381 / DSM 21671 / CCUG 45161 / LMG 19568 / NCTC 13146 / CH001A).